The following is a 637-amino-acid chain: MLNITLPDCSVRQYESPVTVAQIAASIGAGLAKAAVAGKVNGKLVDACDPIVEDSAVQIITPKDQEGIEIIRHSCAHLVGHAVKQLYPNAKMVIGPVIEEGFYYDIATEKPFTPEDVAAIEARMKELIAQDYDVVKIMTPRAEAIKIFQERGEEYKLRLIDDMPEVEAMGIYHHQEYVDMCRGPHVPNTRFLKNFKLTKLAGAYWRGDSNNEMLQRIYGTAWATKDELKDYIQRIEEAEKRDHRKLGKQLDLFHLQDEAPGMVFWHPKGWALWQTIEQHMRKELNAAGYKEVKTPQIMDKTFWEKSGHWDNYKDNMFVTSSEKREYAVKPMNCPGHVQIFNNGLRSYRDLPMRLAEFGSCHRNEPSGALHGLMRVRGFVQDDAHIFCTEDQIVSEARAFNELLVRIYKQFGFHDVSVRLSLRPEKRAGSDDVWDKAEQGLREALTACGVEWGELPGEGAFYGPKIEYHVKDALGRSWQCGTLQLDFVLPERLDAEYVTENNDRARPVMLHRAILGSLERFIGILIENHAGSFPLWLAPVQMVIMNITENQADYCREVAAKLQAAGFRAELDLRNEKIGYKIRDNSQYRFPYQIVIGDKEKQENKVAVRRKAEDLGSLDLDDFIAQLQQEITDALVNH.

Residues Met1–Thr61 enclose the TGS domain. Residues Asp242 to Pro533 are catalytic. The Zn(2+) site is built by Cys333, His384, and His510.

The protein belongs to the class-II aminoacyl-tRNA synthetase family. In terms of assembly, homodimer. Requires Zn(2+) as cofactor.

It localises to the cytoplasm. The enzyme catalyses tRNA(Thr) + L-threonine + ATP = L-threonyl-tRNA(Thr) + AMP + diphosphate + H(+). Its function is as follows. Catalyzes the attachment of threonine to tRNA(Thr) in a two-step reaction: L-threonine is first activated by ATP to form Thr-AMP and then transferred to the acceptor end of tRNA(Thr). Also edits incorrectly charged L-seryl-tRNA(Thr). This is Threonine--tRNA ligase from Neisseria gonorrhoeae (strain ATCC 700825 / FA 1090).